The chain runs to 30 residues: Neurotoxin II.22.5 (30 aa).

The 30-residue stretch at 1 to 30 (KEGYIVNYHTGCKYTCAKLGDNDYCLRECK) folds into the LCN-type CS-alpha/beta domain.

Belongs to the long (4 C-C) scorpion toxin superfamily. Sodium channel inhibitor family. Beta subfamily. In terms of tissue distribution, expressed by the venom gland.

It localises to the secreted. In terms of biological role, binds to sodium channels (Nav) and inhibits the inactivation of the activated channels, thereby blocking neuronal transmission. The sequence is that of Neurotoxin II.22.5 from Centruroides tecomanus (Scorpion).